The primary structure comprises 385 residues: S-adenosylmethionine synthase (385 aa).

H14 is a binding site for ATP. Residue D16 participates in Mg(2+) binding. E42 is a K(+) binding site. Residues E55 and Q98 each coordinate L-methionine. The interval 98 to 108 (QSGDIAQAVDN) is flexible loop. ATP-binding positions include 165–167 (DAK), 232–233 (RF), D241, 247–248 (RK), A264, and K268. D241 contributes to the L-methionine binding site. K272 lines the L-methionine pocket.

This sequence belongs to the AdoMet synthase family. Homotetramer; dimer of dimers. It depends on Mg(2+) as a cofactor. Requires K(+) as cofactor.

It localises to the cytoplasm. The enzyme catalyses L-methionine + ATP + H2O = S-adenosyl-L-methionine + phosphate + diphosphate. It functions in the pathway amino-acid biosynthesis; S-adenosyl-L-methionine biosynthesis; S-adenosyl-L-methionine from L-methionine: step 1/1. In terms of biological role, catalyzes the formation of S-adenosylmethionine (AdoMet) from methionine and ATP. The overall synthetic reaction is composed of two sequential steps, AdoMet formation and the subsequent tripolyphosphate hydrolysis which occurs prior to release of AdoMet from the enzyme. The polypeptide is S-adenosylmethionine synthase (Leuconostoc mesenteroides subsp. mesenteroides (strain ATCC 8293 / DSM 20343 / BCRC 11652 / CCM 1803 / JCM 6124 / NCDO 523 / NBRC 100496 / NCIMB 8023 / NCTC 12954 / NRRL B-1118 / 37Y)).